The chain runs to 123 residues: Small ribosomal subunit protein uS12 (123 aa).

Residue Asp89 is modified to 3-methylthioaspartic acid. Positions 101 to 123 are disordered; the sequence is SLDTSGVKDRKQGRSKYGAKRPK. Positions 113 to 123 are enriched in basic residues; sequence GRSKYGAKRPK.

Belongs to the universal ribosomal protein uS12 family. In terms of assembly, part of the 30S ribosomal subunit. Contacts proteins S8 and S17. May interact with IF1 in the 30S initiation complex.

Functionally, with S4 and S5 plays an important role in translational accuracy. Interacts with and stabilizes bases of the 16S rRNA that are involved in tRNA selection in the A site and with the mRNA backbone. Located at the interface of the 30S and 50S subunits, it traverses the body of the 30S subunit contacting proteins on the other side and probably holding the rRNA structure together. The combined cluster of proteins S8, S12 and S17 appears to hold together the shoulder and platform of the 30S subunit. The sequence is that of Small ribosomal subunit protein uS12 from Stutzerimonas stutzeri (strain A1501) (Pseudomonas stutzeri).